A 141-amino-acid polypeptide reads, in one-letter code: MGNKESKYLEMCSEEAWLNIPNIFKCIFIRKLFYNKWLKYQEKKLKKSLKLLSFYHPKKDFVGIRDMLHMAPGGSYFITDNITEEFLMLVVKHPEDGSAEFTKLCLKGSCIVIDGYYYDTLHIFLSETPDIYKYPLIRYDR.

This sequence belongs to the asfivirus MGF 100 family.

Functionally, plays a role in virus cell tropism, and may be required for efficient virus replication in macrophages. The chain is Protein MGF 100-2L from African swine fever virus (strain Badajoz 1971 Vero-adapted) (Ba71V).